The sequence spans 467 residues: Cysteine--tRNA ligase (467 aa).

Residue Cys-27 coordinates Zn(2+). Positions 29–39 (ATVQGLPHIGH) match the 'HIGH' region motif. Zn(2+) contacts are provided by Cys-209, His-234, and Glu-238. The short motif at 265–269 (KMSKS) is the 'KMSKS' region element. Lys-268 contributes to the ATP binding site.

This sequence belongs to the class-I aminoacyl-tRNA synthetase family. Monomer. The cofactor is Zn(2+).

The protein localises to the cytoplasm. It carries out the reaction tRNA(Cys) + L-cysteine + ATP = L-cysteinyl-tRNA(Cys) + AMP + diphosphate. This chain is Cysteine--tRNA ligase, found in Mycolicibacterium gilvum (strain PYR-GCK) (Mycobacterium gilvum (strain PYR-GCK)).